Here is a 615-residue protein sequence, read N- to C-terminus: Crinkler effector protein 15 (615 aa).

The N-terminal stretch at methionine 1–proline 17 is a signal peptide. The interval valine 18 to lysine 54 is LQLFLAK domain. The interval glutamine 55–isoleucine 136 is DWL domain. An HVLVXXP motif motif is present at residues histidine 137–proline 143. Asparagine 531 is a glycosylation site (N-linked (GlcNAc...) asparagine).

Belongs to the Crinkler effector family.

The protein resides in the secreted. Its subcellular location is the host nucleus. Its function is as follows. Secreted effector that elicits necrosis in host plants, a characteristic of plant innate immunity. The sequence is that of Crinkler effector protein 15 from Phytophthora infestans (Potato late blight agent).